The sequence spans 467 residues: MKPTLVLVGRPNVGKSTLFNRLTRSRDAIVADIPGLTRDRHYGHGRLGLKPYLVVDTGGFEPVVKSGILHAMAKQTLQAVDEADIVLFIVDGRQGLAAQDKIIAEQLRKTGQKIILVVNKTEGMPYSSVTAEFHELGLGTPCAVSALHGDHLGELIDFALEGYPYEEETAAEPGQEKCPVIAIAGRPNVGKSTLINTLLGEERVIAFDQPGTTRDSIYVDFEYGQRSYTLIDTAGLRRSGKVWETVEKFSVVKTLQSIEAANVVILVLDAHHEISDQDAHIAGFILETGRSLVVAINKWDGLDDYQREIIKREFERKLGFLSFANLHYISALYGNGVKGLMPSVDAAYAAARAHIPTPKLTRAMLAAVAKQQPPRGGMSRPKLRYAHQGGENPPLIIVHGSMLEHVPQTYRRYLENTFREVFKLKGTPLRVEFRTGHNPYAGKKTPLTEEEARRAHSRRRRNRKKYG.

2 consecutive EngA-type G domains span residues 3–167 (PTLV…PYEE) and 179–352 (PVIA…AAAR). GTP-binding positions include 9-16 (GRPNVGKS), 56-60 (DTGGF), 119-122 (NKTE), 185-192 (GRPNVGKS), 232-236 (DTAGL), and 297-300 (NKWD). The 85-residue stretch at 353-437 (AHIPTPKLTR…PLRVEFRTGH (85 aa)) folds into the KH-like domain. The disordered stretch occupies residues 434 to 467 (RTGHNPYAGKKTPLTEEEARRAHSRRRRNRKKYG). Residues 455–467 (AHSRRRRNRKKYG) are compositionally biased toward basic residues.

This sequence belongs to the TRAFAC class TrmE-Era-EngA-EngB-Septin-like GTPase superfamily. EngA (Der) GTPase family. Associates with the 50S ribosomal subunit.

GTPase that plays an essential role in the late steps of ribosome biogenesis. The polypeptide is GTPase Der (Nitrosomonas europaea (strain ATCC 19718 / CIP 103999 / KCTC 2705 / NBRC 14298)).